Here is a 73-residue protein sequence, read N- to C-terminus: MGKKEEAFEVEGTVTQALANTRFRVQLETGNEVMAHVAGRMRKHFIRIVPGDKVRVELSPYDLTKGRIVYRER.

Residues M1–R73 enclose the S1-like domain.

This sequence belongs to the IF-1 family. As to quaternary structure, component of the 30S ribosomal translation pre-initiation complex which assembles on the 30S ribosome in the order IF-2 and IF-3, IF-1 and N-formylmethionyl-tRNA(fMet); mRNA recruitment can occur at any time during PIC assembly.

It localises to the cytoplasm. In terms of biological role, one of the essential components for the initiation of protein synthesis. Stabilizes the binding of IF-2 and IF-3 on the 30S subunit to which N-formylmethionyl-tRNA(fMet) subsequently binds. Helps modulate mRNA selection, yielding the 30S pre-initiation complex (PIC). Upon addition of the 50S ribosomal subunit IF-1, IF-2 and IF-3 are released leaving the mature 70S translation initiation complex. The polypeptide is Translation initiation factor IF-1 (Rhodopirellula baltica (strain DSM 10527 / NCIMB 13988 / SH1)).